Reading from the N-terminus, the 89-residue chain is DNA-directed RNA polymerase subunit Rpo6 (89 aa).

The protein belongs to the archaeal Rpo6/eukaryotic RPB6 RNA polymerase subunit family. As to quaternary structure, part of the 13-subunit RNA polymerase complex.

The protein resides in the cytoplasm. The catalysed reaction is RNA(n) + a ribonucleoside 5'-triphosphate = RNA(n+1) + diphosphate. DNA-dependent RNA polymerase (RNAP) catalyzes the transcription of DNA into RNA using the four ribonucleoside triphosphates as substrates. In terms of biological role, reconstitution experiments show this subunit is required for basic activity. The chain is DNA-directed RNA polymerase subunit Rpo6 from Sulfolobus acidocaldarius (strain ATCC 33909 / DSM 639 / JCM 8929 / NBRC 15157 / NCIMB 11770).